Here is a 737-residue protein sequence, read N- to C-terminus: Ribosome-releasing factor 2, mitochondrial (737 aa).

The N-terminal 29 residues, 1-29 (MLKYALHSGGMPRNRLLRQLSAHIFRRSY), are a transit peptide targeting the mitochondrion. The tr-type G domain occupies 31–310 (SNIRNIGILA…AVNTYLPAPE (280 aa)). Residues 40 to 47 (AHIDAGKT), 104 to 108 (DTPGH), and 158 to 161 (NKMD) contribute to the GTP site.

This sequence belongs to the TRAFAC class translation factor GTPase superfamily. Classic translation factor GTPase family. EF-G/EF-2 subfamily.

It is found in the mitochondrion. Its function is as follows. Mitochondrial GTPase that mediates the disassembly of ribosomes from messenger RNA at the termination of mitochondrial protein biosynthesis. Not involved in the GTP-dependent ribosomal translocation step during translation elongation. The sequence is that of Ribosome-releasing factor 2, mitochondrial from Drosophila pseudoobscura pseudoobscura (Fruit fly).